The primary structure comprises 928 residues: Protein ARABIDILLO 2 (928 aa).

The Nuclear localization signal motif lies at 3-8 (RRVRQR). Positions 37–83 (YVNWTSLPYDTVFHLFTRLNYRDRASLASTCRTWRSLGASSFLWSSL) constitute an F-box domain. ARM repeat units lie at residues 147-186 (AARHEALESLQLGPDFCERITSDAIRVIAFCCPKLKKLRV), 237-278 (TSNI…KSSQ), 303-341 (KGKVLLAVFTDTFDELASIFADNSKKPKNIFSYWRDLIR), 370-409 (SQGLNDFWLNQGATLLLSLMQSAQEDVQERAATGLATFIV), 419-458 (CGRAEAVMRDGGIRLLLELAKSWREGLQSEAAKAIANLSV), 460-499 (AKVAKAVAEEGGISVLADLAKSMNRLVAEEAAGGLWNLSV), 501-543 (EEHK…NLAA), 545-585 (DKCS…NLAA), 591-630 (GNNAAVGQEAGALEALVQLTQSPHEGVKQEAAGALWNLAF), 632-674 (DKNR…GLSV), 676-715 (EANSIAIGHEGGIPPLIALVRSEAEDVHETAAGALWNLSF), 717-757 (PGNA…YMFD), and 824-864 (IPEA…QFTI).

Belongs to the beta-catenin family. As to expression, expressed ubiquitously.

It is found in the nucleus. Its function is as follows. Promotes lateral root initiation and development, independently of auxin (IAA) and abscisis acid (ABA). The sequence is that of Protein ARABIDILLO 2 from Arabidopsis thaliana (Mouse-ear cress).